Reading from the N-terminus, the 838-residue chain is V-type proton ATPase 116 kDa subunit a 1 (838 aa).

Residues 1 to 388 are Cytoplasmic-facing; it reads MGELFRSEEM…DAYGIGTYRE (388 aa). Residues threonine 250 and threonine 360 each carry the phosphothreonine modification. Tyrosine 364 carries the post-translational modification Phosphotyrosine. The helical transmembrane segment at 389–407 threads the bilayer; it reads INPAPYTIITFPFLFAVMF. The Vacuolar portion of the chain corresponds to 408-409; sequence GD. A helical membrane pass occupies residues 410–426; it reads LGHGILMTLFAVWMVLK. Topologically, residues 427-441 are cytoplasmic; it reads ESRILSQKNENEMFS. Residues 442–471 traverse the membrane as a helical segment; that stretch reads TIFSGRYIILLMGVFSIYTGLIYNDCFSKS. The Vacuolar segment spans residues 472–535; that stretch reads LNIFGSSWSV…ATNKLTFLNS (64 aa). Residues 536 to 555 traverse the membrane as a helical segment; it reads FKMKMSVILGIIHMLFGVSL. At 556–573 the chain is on the cytoplasmic side; that stretch reads SLFNHTYFKKPLNIYFGF. Residues 574-594 traverse the membrane as a helical segment; it reads IPEIIFMTSLFGYLVILIFYK. Over 595 to 639 the chain is Vacuolar; it reads WTAYNAKTSEKAPSLLIHFINMFLFSYGDSGNSMLYSGQKGIQCF. A helical membrane pass occupies residues 640-659; the sequence is LVVVALLCVPWMLLFKPLVL. Over 660-725 the chain is Cytoplasmic; that stretch reads RRQYLRRKHL…DTMVHQAIHT (66 aa). A helical transmembrane segment spans residues 726 to 750; sequence IEYCLGCISNTASYLRLWALSLAHA. Over 751 to 771 the chain is Vacuolar; sequence QLSEVLWTMVIHIGLKVKSLA. The helical transmembrane segment at 772 to 810 threads the bilayer; it reads GGLALFFIFAAFATLTVAILLIMEGLSAFLHALRLHWVE. Residues 811 to 838 lie on the Cytoplasmic side of the membrane; sequence FQNKFYSGTGFKFLPFSFEHIREGKFDD.

The protein belongs to the V-ATPase 116 kDa subunit family. In terms of assembly, V-ATPase is a heteromultimeric enzyme made up of two complexes: the ATP-hydrolytic V1 complex and the proton translocation V0 complex. The V1 complex consists of three catalytic AB heterodimers that form a heterohexamer, three peripheral stalks each consisting of EG heterodimers, one central rotor including subunits D and F, and the regulatory subunits C and H. The proton translocation complex V0 consists of the proton transport subunit a, a ring of proteolipid subunits c9c'', rotary subunit d, subunits e and f, and the accessory subunits ATP6AP1/Ac45 and ATP6AP2/PRR. Interacts with SPAAR. In terms of tissue distribution, expressed in brain (at protein level). As to expression, expressed heart, kidney, liver, spleen, and to a lesser extent in brain.

The protein localises to the cytoplasmic vesicle. The protein resides in the clathrin-coated vesicle membrane. It is found in the secretory vesicle. It localises to the synaptic vesicle membrane. Its subcellular location is the melanosome. In terms of biological role, subunit of the V0 complex of vacuolar(H+)-ATPase (V-ATPase), a multisubunit enzyme composed of a peripheral complex (V1) that hydrolyzes ATP and a membrane integral complex (V0) that translocates protons. V-ATPase is responsible for the acidification of various organelles, such as lysosomes, endosomes, the trans-Golgi network, and secretory granules, including synaptic vesicles. In certain cell types, can be exported to the plasma membrane, where it is involved in the acidification of the extracellular environment. Required for assembly and activity of the vacuolar ATPase. Through its action on compartment acidification, plays an essential role in neuronal development in terms of integrity and connectivity of neurons. This Bos taurus (Bovine) protein is V-type proton ATPase 116 kDa subunit a 1 (ATP6V0A1).